The primary structure comprises 445 residues: Histidinol dehydrogenase (445 aa).

3 residues coordinate NAD(+): tyrosine 138, glutamine 199, and asparagine 222. Serine 245, glutamine 267, and histidine 270 together coordinate substrate. Zn(2+) is bound by residues glutamine 267 and histidine 270. Catalysis depends on proton acceptor residues glutamate 335 and histidine 336. Residues histidine 336, aspartate 369, glutamate 423, and histidine 428 each coordinate substrate. Zn(2+) is bound at residue aspartate 369. Histidine 428 is a Zn(2+) binding site.

It belongs to the histidinol dehydrogenase family. Requires Zn(2+) as cofactor.

The enzyme catalyses L-histidinol + 2 NAD(+) + H2O = L-histidine + 2 NADH + 3 H(+). It functions in the pathway amino-acid biosynthesis; L-histidine biosynthesis; L-histidine from 5-phospho-alpha-D-ribose 1-diphosphate: step 9/9. Functionally, catalyzes the sequential NAD-dependent oxidations of L-histidinol to L-histidinaldehyde and then to L-histidine. The polypeptide is Histidinol dehydrogenase (Burkholderia pseudomallei (strain 1710b)).